A 145-amino-acid polypeptide reads, in one-letter code: 3-dehydroquinate dehydratase (145 aa).

Catalysis depends on tyrosine 24, which acts as the Proton acceptor. Substrate is bound by residues asparagine 76, histidine 82, and aspartate 89. The active-site Proton donor is histidine 102. Residues 103–104 and arginine 113 each bind substrate; that span reads LS.

It belongs to the type-II 3-dehydroquinase family. Homododecamer.

The enzyme catalyses 3-dehydroquinate = 3-dehydroshikimate + H2O. It participates in metabolic intermediate biosynthesis; chorismate biosynthesis; chorismate from D-erythrose 4-phosphate and phosphoenolpyruvate: step 3/7. Functionally, catalyzes a trans-dehydration via an enolate intermediate. This chain is 3-dehydroquinate dehydratase, found in Nitrosomonas eutropha (strain DSM 101675 / C91 / Nm57).